The primary structure comprises 159 residues: S-ribosylhomocysteine lyase (159 aa).

Fe cation contacts are provided by His-53, His-57, and Cys-124.

Belongs to the LuxS family. Homodimer. Fe cation serves as cofactor.

The catalysed reaction is S-(5-deoxy-D-ribos-5-yl)-L-homocysteine = (S)-4,5-dihydroxypentane-2,3-dione + L-homocysteine. In terms of biological role, involved in the synthesis of autoinducer 2 (AI-2) which is secreted by bacteria and is used to communicate both the cell density and the metabolic potential of the environment. The regulation of gene expression in response to changes in cell density is called quorum sensing. Catalyzes the transformation of S-ribosylhomocysteine (RHC) to homocysteine (HC) and 4,5-dihydroxy-2,3-pentadione (DPD). This is S-ribosylhomocysteine lyase from Desulfotalea psychrophila (strain LSv54 / DSM 12343).